A 1313-amino-acid polypeptide reads, in one-letter code: MKHFMMPRNAILRDIGESQSPNPSLTKSKSQRKIKSSKENAPPPDLNSLIPDHRSSPAKLKSPLPPRPPSSNPLKRKLIAEATADNGVAIGVSDSGVKVIVRMKPPSKGEEEEMIVKKISNDALTINEQTFTFDSIADPESTQDEIFQLVGAPLVENCLAGFNSSVFAYGQTGSGKTYTMWGPANGLLEEHLSGDQRGLTPRVFELLFARLSEEQAKHAERQLKYQCRCSFLEIYNEQITDLLDPSLKNLMIREDVKSGVYVENLTEEYVKNLKDLSKLLVKGLANRRTGATSVNAESSRSHCVFTCVVESHCKSVADGLSSFKTSRINLVDLAGSERQKLTGAAGDRLKEAGNINRSLSQLGNLINILAEISQTGKQRHIPYRDSRLTFLLQESLGGNAKLAMVCAVSPSQSCRSETFSTLRFAQRAKAIQNKAIVNEVMQDDVNFLREVIRQLRDELQRVKDDKGNNPTNPNAAYTTSWNARRSLSLLRSFGLGHPKSLPNGDDDGDTEMEIDEEAVERLCAQMGLSPPAEDNNQEMSRVEKINSSLQTVVLKDESYNNSHLKSSEATDVNMEDACCQTENNGSETDNALTVAETMDDGSSVQPDSITNSLHSCISDTNQGNSPSKAENIPSCQDLVIEADVSAIVSVADTSNNTEQVSVNPVSPCLSVAPVSVSPVLIPPTESASPKIRNSRKSLRTTSMSTASQKDIERANQLTPEVVEPSPAMSTEVLNLYSALSTKKSEAFPVPTRQLAASLHRGMKLLDSYRQSTALRRSTFRLSYKALECKPSTVLSKADVGVQTYPQADEIAEDNSKEVLCSRCKCRAECDAQEISDTSNLQLVPIDNSEGSEKSNFQVPKAVEKVLAGSIRREMAMEEFCTKQASEISQLNRLVQQYKHERECNAIIGQTREDKIVRLESLMDGVLSKDDFLDEEFASLMHEHKLLKDMYENHPEVLQTRIELKRVQEELESFKNFYGDMGEREVLLEEIHDLKAQLQCYTDSSLTSARRRGSLLKLTYACDPNQAPQLNTIPESVDEGPEKTLEQERLRWTEAESNWISLAEELRTELDTNRLLMEKQKRELDTEKRCAEELTEAMQMAMQGHARMIEQYADLEEKHIQLLARHRRIREGIDDVKKAAARAGVKGAESRFINALAAEISALKVQREKEVRYFRDENKSLQSQLRDTAEAVQAAGELLVRFKEAEEGLTFAQKRAMDAEYEASEAYKKVDKLKRKYETEISTVNQQHNAEPQNPIESLQASCNDDAMAKYDEPSASDGDNQWREEFQPFYKKDEELSKLAEPSWFSGYDRCNI.

Residues 1-74 (MKHFMMPRNA…PPRPPSSNPL (74 aa)) form a disordered region. Residues 17–26 (ESQSPNPSLT) are compositionally biased toward polar residues. The Kinesin motor domain occupies 96–431 (GVKVIVRMKP…LRFAQRAKAI (336 aa)). Residue 170–177 (GQTGSGKT) coordinates ATP. Microtubules-binding stretches follow at residues 298–302 (SSRSH), 331–337 (VDLAGSE), and 380–384 (HIPYR). The interval 429 to 467 (KAIQNKAIVNEVMQDDVNFLREVIRQLRDELQRVKDDKG) is neck. The segment at 685 to 709 (ESASPKIRNSRKSLRTTSMSTASQK) is disordered. The span at 699–708 (RTTSMSTASQ) shows a compositional bias: polar residues. Coiled coils occupy residues 932-1003 (LDEE…YTDS), 1062-1130 (AEEL…RIRE), and 1167-1241 (EKEV…TEIS).

This sequence belongs to the TRAFAC class myosin-kinesin ATPase superfamily. Kinesin family. KIN-12 subfamily. As to quaternary structure, homodimer and heterodimer with KIN12A. Interacts with TIO.

It is found in the cytoplasm. It localises to the cytoskeleton. The protein localises to the phragmoplast. Functionally, plus-end directed kinesin-like motor enzyme that plays a critical role in the organization of phragmoplast microtubules during cytokinesis. Constitutes a signaling module in association with serine/threonine-protein kinase TIO that is required to support phragmoplast expansion and cell-plate growth in plant cells. The protein is Kinesin-like protein KIN-12B of Arabidopsis thaliana (Mouse-ear cress).